Reading from the N-terminus, the 145-residue chain is Ribosomal RNA large subunit methyltransferase H (145 aa).

Residues glycine 94 and leucine 113–phenylalanine 118 each bind S-adenosyl-L-methionine.

The protein belongs to the RNA methyltransferase RlmH family. Homodimer.

It localises to the cytoplasm. It carries out the reaction pseudouridine(1915) in 23S rRNA + S-adenosyl-L-methionine = N(3)-methylpseudouridine(1915) in 23S rRNA + S-adenosyl-L-homocysteine + H(+). In terms of biological role, specifically methylates the pseudouridine at position 1915 (m3Psi1915) in 23S rRNA. In Sorangium cellulosum (strain So ce56) (Polyangium cellulosum (strain So ce56)), this protein is Ribosomal RNA large subunit methyltransferase H.